We begin with the raw amino-acid sequence, 599 residues long: DNA primase (599 aa).

The segment at Cys40–Cys64 adopts a CHC2-type zinc-finger fold. The 84-residue stretch at Asn259 to Asp342 folds into the Toprim domain. 3 residues coordinate Mg(2+): Glu265, Asp309, and Asp311.

Belongs to the DnaG primase family. As to quaternary structure, monomer. Interacts with DnaB. Zn(2+) serves as cofactor. It depends on Mg(2+) as a cofactor.

The catalysed reaction is ssDNA + n NTP = ssDNA/pppN(pN)n-1 hybrid + (n-1) diphosphate.. Functionally, RNA polymerase that catalyzes the synthesis of short RNA molecules used as primers for DNA polymerase during DNA replication. The sequence is that of DNA primase from Halalkalibacterium halodurans (strain ATCC BAA-125 / DSM 18197 / FERM 7344 / JCM 9153 / C-125) (Bacillus halodurans).